The primary structure comprises 182 residues: UPF0316 protein lp_1140 (182 aa).

The next 3 membrane-spanning stretches (helical) occupy residues 1-21 (MHID…YITL), 36-56 (FAAF…SLVL), and 62-82 (PINL…GMVI).

The protein belongs to the UPF0316 family.

The protein localises to the cell membrane. This chain is UPF0316 protein lp_1140, found in Lactiplantibacillus plantarum (strain ATCC BAA-793 / NCIMB 8826 / WCFS1) (Lactobacillus plantarum).